Reading from the N-terminus, the 629-residue chain is tRNA uridine 5-carboxymethylaminomethyl modification enzyme MnmG (629 aa).

FAD-binding positions include 13–18 (GGGHAG), Val-125, and Ser-180. 273-287 (GPRYCPSIEDKVMRF) is an NAD(+) binding site. Gln-370 is an FAD binding site.

Belongs to the MnmG family. Homodimer. Heterotetramer of two MnmE and two MnmG subunits. Requires FAD as cofactor.

The protein resides in the cytoplasm. Its function is as follows. NAD-binding protein involved in the addition of a carboxymethylaminomethyl (cmnm) group at the wobble position (U34) of certain tRNAs, forming tRNA-cmnm(5)s(2)U34. The sequence is that of tRNA uridine 5-carboxymethylaminomethyl modification enzyme MnmG from Escherichia coli O139:H28 (strain E24377A / ETEC).